The following is a 303-amino-acid chain: Aspartate carbamoyltransferase catalytic subunit (303 aa).

Carbamoyl phosphate-binding residues include R48 and T49. Residue K76 participates in L-aspartate binding. Residues R98, H129, and Q132 each contribute to the carbamoyl phosphate site. Residues R162 and R214 each coordinate L-aspartate. Residues A257 and P258 each contribute to the carbamoyl phosphate site.

It belongs to the aspartate/ornithine carbamoyltransferase superfamily. ATCase family. In terms of assembly, heterododecamer (2C3:3R2) of six catalytic PyrB chains organized as two trimers (C3), and six regulatory PyrI chains organized as three dimers (R2).

It catalyses the reaction carbamoyl phosphate + L-aspartate = N-carbamoyl-L-aspartate + phosphate + H(+). It participates in pyrimidine metabolism; UMP biosynthesis via de novo pathway; (S)-dihydroorotate from bicarbonate: step 2/3. In terms of biological role, catalyzes the condensation of carbamoyl phosphate and aspartate to form carbamoyl aspartate and inorganic phosphate, the committed step in the de novo pyrimidine nucleotide biosynthesis pathway. The chain is Aspartate carbamoyltransferase catalytic subunit from Leuconostoc citreum (strain KM20).